The primary structure comprises 254 residues: Allene oxide cyclase 1, chloroplastic (254 aa).

Residues 1–78 constitute a chloroplast transit peptide; the sequence is MASSTISLQS…QNLGNTENPR (78 aa). Residues 44–56 show a composition bias toward low complexity; it reads SNGPGSSSPTSFT. The interval 44–79 is disordered; sequence SNGPGSSSPTSFTPKKKLTPTRALSQNLGNTENPRP. Residues 65-77 are compositionally biased toward polar residues; that stretch reads RALSQNLGNTENP.

The protein belongs to the allene oxide cyclase family. As to expression, highly expressed in fully developed leaves.

The protein localises to the plastid. It localises to the chloroplast. It carries out the reaction (9Z,13S,15Z)-12,13-epoxyoctadeca-9,11,15-trienoate = (9S,13S,15Z)-12-oxophyto-10,15-dienoate. In terms of biological role, involved in the production of 12-oxo-phytodienoic acid (OPDA), a precursor of jasmonic acid. This is Allene oxide cyclase 1, chloroplastic (AOC1) from Arabidopsis thaliana (Mouse-ear cress).